The primary structure comprises 617 residues: DNA mismatch repair protein MutL (617 aa).

Residues 363–394 (YAPAYGARPPQPSAWSVDTSPHRPLDDGQNRF) are disordered. Over residues 382–392 (SPHRPLDDGQN) the composition is skewed to basic and acidic residues.

Belongs to the DNA mismatch repair MutL/HexB family.

Its function is as follows. This protein is involved in the repair of mismatches in DNA. It is required for dam-dependent methyl-directed DNA mismatch repair. May act as a 'molecular matchmaker', a protein that promotes the formation of a stable complex between two or more DNA-binding proteins in an ATP-dependent manner without itself being part of a final effector complex. In Allorhizobium ampelinum (strain ATCC BAA-846 / DSM 112012 / S4) (Agrobacterium vitis (strain S4)), this protein is DNA mismatch repair protein MutL.